The primary structure comprises 185 residues: Threonylcarbamoyl-AMP synthase (185 aa).

Residues 3 to 185 enclose the YrdC-like domain; sequence EQAPDEVQEI…VDAISGKVLR (183 aa).

The protein belongs to the SUA5 family. TsaC subfamily.

The protein localises to the cytoplasm. It catalyses the reaction L-threonine + hydrogencarbonate + ATP = L-threonylcarbamoyladenylate + diphosphate + H2O. Required for the formation of a threonylcarbamoyl group on adenosine at position 37 (t(6)A37) in tRNAs that read codons beginning with adenine. Catalyzes the conversion of L-threonine, HCO(3)(-)/CO(2) and ATP to give threonylcarbamoyl-AMP (TC-AMP) as the acyladenylate intermediate, with the release of diphosphate. The protein is Threonylcarbamoyl-AMP synthase of Shewanella sediminis (strain HAW-EB3).